The following is a 264-amino-acid chain: Hemin import ATP-binding protein HmuV (264 aa).

The region spanning 2–241 (IEVSGVSVRL…ETMLAVFGCA (240 aa)) is the ABC transporter domain. 34–41 (GPNGSGKT) provides a ligand contact to ATP.

Belongs to the ABC transporter superfamily. Heme (hemin) importer (TC 3.A.1.14.5) family. In terms of assembly, the complex is composed of two ATP-binding proteins (HmuV), two transmembrane proteins (HmuU) and a solute-binding protein (HmuT).

The protein resides in the cell inner membrane. Part of the ABC transporter complex HmuTUV involved in hemin import. Responsible for energy coupling to the transport system. This Rhizobium johnstonii (strain DSM 114642 / LMG 32736 / 3841) (Rhizobium leguminosarum bv. viciae) protein is Hemin import ATP-binding protein HmuV.